A 168-amino-acid chain; its full sequence is Peptide deformylase 2 (168 aa).

Residues Cys91 and His133 each contribute to the Fe cation site. The active site involves Glu134. His137 contacts Fe cation.

It belongs to the polypeptide deformylase family. Fe(2+) is required as a cofactor.

The enzyme catalyses N-terminal N-formyl-L-methionyl-[peptide] + H2O = N-terminal L-methionyl-[peptide] + formate. Removes the formyl group from the N-terminal Met of newly synthesized proteins. Requires at least a dipeptide for an efficient rate of reaction. N-terminal L-methionine is a prerequisite for activity but the enzyme has broad specificity at other positions. The chain is Peptide deformylase 2 from Vibrio cholerae serotype O1 (strain ATCC 39315 / El Tor Inaba N16961).